A 209-amino-acid chain; its full sequence is Germin-like protein (209 aa).

A signal peptide spans 1–18 (MIVPIFFLFSLLFSSSHG). Residues cysteine 24 and cysteine 39 are joined by a disulfide bond. In terms of domain architecture, Cupin type-1 spans 53–199 (SGLGITGNTT…ASFLDPAEIK (147 aa)). A glycan (N-linked (GlcNAc...) asparagine) is linked at asparagine 60. The Mn(2+) site is built by histidine 101, histidine 103, glutamate 108, and histidine 147.

It localises to the secreted. It is found in the extracellular space. Its subcellular location is the apoplast. In terms of biological role, has antibacterial activity against B.subtilis (MIC=5 ug), B.cereus (MIC=50 ug), A.hydrophila (MIC=2.5 ug), S.marcescens(MIC=10 ug), S.enterica (MIC=10 ug), P.entomophila (MIC=2.5 ug) and P.rhodesiae (MIC=10 ug). Has antifungal activity against F.solani KACC 40384 and F.oxysporum KACC 40032. Probably has no oxalate oxidase activity even if the active site is conserved. This Morus alba (White mulberry) protein is Germin-like protein.